The following is a 196-amino-acid chain: Venom platylysin (196 aa).

It belongs to the redulysin-like family. Expressed by the venom gland.

The protein resides in the secreted. Functionally, probable insecticidal toxin that has been detected in a semi-pure insecticidal fraction. The sequence is that of Venom platylysin from Platymeris biguttatus (Two-spotted assassin bug).